A 368-amino-acid chain; its full sequence is Glutamate 5-kinase (368 aa).

K9 contributes to the ATP binding site. Residues S49, D136, and N148 each coordinate substrate. ATP contacts are provided by residues 168–169 (TD) and 210–216 (TGGMMTK). The PUA domain maps to 275-353 (AGIITIDDGA…ADIENVLGYE (79 aa)).

This sequence belongs to the glutamate 5-kinase family.

The protein resides in the cytoplasm. The catalysed reaction is L-glutamate + ATP = L-glutamyl 5-phosphate + ADP. It functions in the pathway amino-acid biosynthesis; L-proline biosynthesis; L-glutamate 5-semialdehyde from L-glutamate: step 1/2. In terms of biological role, catalyzes the transfer of a phosphate group to glutamate to form L-glutamate 5-phosphate. In Haemophilus influenzae (strain 86-028NP), this protein is Glutamate 5-kinase.